A 169-amino-acid chain; its full sequence is uncharacterized protein (169 aa).

One can recognise an N-acetyltransferase domain in the interval 4 to 160 (IEVKRLLVNY…EGVKEQLSED (157 aa)).

This is an uncharacterized protein from Halalkalibacterium halodurans (strain ATCC BAA-125 / DSM 18197 / FERM 7344 / JCM 9153 / C-125) (Bacillus halodurans).